Here is a 166-residue protein sequence, read N- to C-terminus: Interferon gamma (166 aa).

Residues 1–23 (MKYTSYILAFQLCVVLGSLGCYC) form the signal peptide. The residue at position 24 (Gln-24) is a Pyrrolidone carboxylic acid. Residues Asn-48, Asn-86, and Asn-120 are each glycosylated (N-linked (GlcNAc...) asparagine).

It belongs to the type II (or gamma) interferon family. In terms of assembly, homodimer. Interacts with IFNGR1 (via extracellular domain); this interaction promotes IFNGR1 dimerization. In terms of tissue distribution, released primarily from activated T lymphocytes.

The protein localises to the secreted. Type II interferon produced by immune cells such as T-cells and NK cells that plays crucial roles in antimicrobial, antiviral, and antitumor responses by activating effector immune cells and enhancing antigen presentation. Primarily signals through the JAK-STAT pathway after interaction with its receptor IFNGR1 to affect gene regulation. Upon IFNG binding, IFNGR1 intracellular domain opens out to allow association of downstream signaling components JAK2, JAK1 and STAT1, leading to STAT1 activation, nuclear translocation and transcription of IFNG-regulated genes. Many of the induced genes are transcription factors such as IRF1 that are able to further drive regulation of a next wave of transcription. Plays a role in class I antigen presentation pathway by inducing a replacement of catalytic proteasome subunits with immunoproteasome subunits. In turn, increases the quantity, quality, and repertoire of peptides for class I MHC loading. Increases the efficiency of peptide generation also by inducing the expression of activator PA28 that associates with the proteasome and alters its proteolytic cleavage preference. Up-regulates as well MHC II complexes on the cell surface by promoting expression of several key molecules such as cathepsins B/CTSB, H/CTSH, and L/CTSL. Participates in the regulation of hematopoietic stem cells during development and under homeostatic conditions by affecting their development, quiescence, and differentiation. This is Interferon gamma (IFNG) from Callithrix jacchus (White-tufted-ear marmoset).